The sequence spans 157 residues: C-type lectin 9a (157 aa).

Positions 1-23 are cleaved as a signal peptide; sequence MGRFIFVSFGLLVVFLSLSGTGA. Cystine bridges form between Cys27/Cys38, Cys55/Cys151, and Cys126/Cys143. In terms of domain architecture, C-type lectin spans 34-152; sequence YDQYCYKPFN…CQAKKPFVCK (119 aa).

Belongs to the snaclec family. Heteromultimer; disulfide-linked. In terms of tissue distribution, expressed by the venom gland.

It localises to the secreted. Its function is as follows. Interferes with one step of hemostasis (modulation of platelet aggregation, or coagulation cascade, for example). The protein is C-type lectin 9a of Crotalus adamanteus (Eastern diamondback rattlesnake).